The sequence spans 475 residues: BTB/POZ domain-containing protein 10 (475 aa).

The disordered stretch occupies residues Met-1–Cys-143. A compositionally biased stretch (basic residues) spans Leu-22–Lys-31. Over residues Gly-57–Glu-80 the composition is skewed to basic and acidic residues. The segment covering Ser-81 to Thr-94 has biased composition (polar residues). Basic and acidic residues predominate over residues His-97–Ser-107. The segment covering Ser-108–Ser-142 has biased composition (low complexity). Residues Ala-146–Leu-475 form an interaction with AKT family members region. The region spanning Glu-167–Asp-241 is the BTB domain. The tract at residues Pro-456–Leu-475 is disordered.

As to quaternary structure, interacts (via C-terminal 330-amino-acid region) with AKT1; AKT2 and AKT3. Interacts with PPP2CA and PPP1CA.

The protein localises to the nucleus. The protein resides in the cytoplasm. Its function is as follows. Plays a major role as an activator of AKT family members by inhibiting PPP2CA-mediated dephosphorylation, thereby keeping AKTs activated. Plays a role in preventing motor neuronal death and in accelerating the growth of pancreatic beta cells. The protein is BTB/POZ domain-containing protein 10 (BTBD10) of Pongo abelii (Sumatran orangutan).